The sequence spans 851 residues: Nucleolar RNA helicase 2 (851 aa).

Positions 1-260 (MPGKLRSGAK…IPVEQKEGAF (260 aa)) are disordered. Residues Ser-7 and Ser-13 each carry the phosphoserine modification. Composition is skewed to basic and acidic residues over residues 26 to 42 (PSEK…KTEE) and 99 to 113 (EPLE…KEII). N6-acetyllysine is present on Lys-39. 3 tandem repeats follow at residues 117–153 (PSEE…GLSQ), 154–190 (PSEE…GLSQ), and 191–227 (PSEE…GLSQ). The 3 X 37 AA tandem repeats stretch occupies residues 117–227 (PSEEEADMPK…SPRLKDGLSQ (111 aa)). Phosphoserine is present on Ser-118. Over residues 133 to 145 (GKEANGDAGEKSP) the composition is skewed to basic and acidic residues. Position 134 is an N6-acetyllysine (Lys-134). Residues Ser-144, Ser-155, Ser-181, Ser-192, Ser-218, Ser-236, Ser-243, Ser-244, and Ser-245 each carry the phosphoserine modification. Basic and acidic residues predominate over residues 170 to 182 (GKEANGDAGEKSP). The span at 207-223 (GKEASGDAGEKSPRLKD) shows a compositional bias: basic and acidic residues. Residues 226-237 (SQPSEPKSNSSD) are compositionally biased toward polar residues. Residues 246 to 257 (ETEKEIPVEQKE) are compositionally biased toward basic and acidic residues. Positions 258–286 (GAFSNFPISEETVKLLKARGVNFLFPIQA) match the Q motif motif. The region spanning 289–468 (FHHVYSGKDL…KKYMKSTYEQ (180 aa)) is the Helicase ATP-binding domain. 302–309 (ARTGTGKT) serves as a coordination point for ATP. Residue Thr-368 is modified to Phosphothreonine. A DEAD box motif is present at residues 411 to 414 (DEVD). Positions 501 to 645 (DVIRVYSGHQ…GVPSATEIIK (145 aa)) constitute a Helicase C-terminal domain. Ser-639 is subject to Phosphoserine. Lys-672 carries the post-translational modification N6-acetyllysine. The disordered stretch occupies residues 783 to 851 (QPELEGPPDG…KRSFSKAFGQ (69 aa)). 3 repeat units span residues 807-811 (FRGQR), 817-823 (FRGQGQR), and 829-833 (FRGQR). The segment at 807 to 833 (FRGQRGGSRNFRGQGQRGGSRNFRGQR) is 3 X 5 AA repeats. Residue Lys-847 is modified to N6-acetyllysine.

This sequence belongs to the DEAD box helicase family. DDX21/DDX50 subfamily. Homodimer; homodimerizes via its N-terminus. Found in a multi-helicase-TICAM1 complex at least composed of DHX36, DDX1, DDX21 and TICAM1; this complex exists in resting cells with or without poly(I:C) RNA ligand stimulation. Interacts (via C-terminus) with TICAM1 (via TIR domain). Interacts with DHX36 (via C-terminus); this interaction serves as bridges to TICAM1. Interacts (via C-terminus) with DDX1 (via B30.2/SPRY domain); this interaction serves as bridges to TICAM1. Component of the B-WICH complex, at least composed of SMARCA5/SNF2H, BAZ1B/WSTF, SF3B1, DEK, MYO1C, ERCC6, MYBBP1A and DDX21. Interacts with C1QBP. Interacts with JUN. Interacts with WDR46. Interacts with MCM3AP. Interacts with WDR43. Interacts with KPNA3. Interacts with GID4. Acetylation by CREBBP/CBP inhibits the helicase activity. Deacetylation by SIRT7 promotes the helicase activity and overcomes R-loop-mediated stalling of RNA polymerases. As to expression, highly expressed in liver and testis. Expressed at lower level in brain, lungs, and skeletal muscle.

It is found in the nucleus. The protein resides in the nucleolus. The protein localises to the nucleoplasm. Its subcellular location is the cytoplasm. It localises to the cytosol. It is found in the mitochondrion. The catalysed reaction is ATP + H2O = ADP + phosphate + H(+). With respect to regulation, acetylation inhibits the helicase activity. RNA helicase that acts as a sensor of the transcriptional status of both RNA polymerase (Pol) I and II: promotes ribosomal RNA (rRNA) processing and transcription from polymerase II (Pol II). Binds various RNAs, such as rRNAs, snoRNAs, 7SK and, at lower extent, mRNAs. In the nucleolus, localizes to rDNA locus, where it directly binds rRNAs and snoRNAs, and promotes rRNA transcription, processing and modification. Required for rRNA 2'-O-methylation, possibly by promoting the recruitment of late-acting snoRNAs SNORD56 and SNORD58 with pre-ribosomal complexes. In the nucleoplasm, binds 7SK RNA and is recruited to the promoters of Pol II-transcribed genes: acts by facilitating the release of P-TEFb from inhibitory 7SK snRNP in a manner that is dependent on its helicase activity, thereby promoting transcription of its target genes. Functions as cofactor for JUN-activated transcription: required for phosphorylation of JUN at 'Ser-77'. Can unwind double-stranded RNA (helicase) and can fold or introduce a secondary structure to a single-stranded RNA (foldase). Together with SIRT7, required to prevent R-loop-associated DNA damage and transcription-associated genomic instability: deacetylation by SIRT7 activates the helicase activity, thereby overcoming R-loop-mediated stalling of RNA polymerases. Involved in rRNA processing. May bind to specific miRNA hairpins. Component of a multi-helicase-TICAM1 complex that acts as a cytoplasmic sensor of viral double-stranded RNA (dsRNA) and plays a role in the activation of a cascade of antiviral responses including the induction of pro-inflammatory cytokines via the adapter molecule TICAM1. This Mus musculus (Mouse) protein is Nucleolar RNA helicase 2 (Ddx21).